The chain runs to 323 residues: RING-H2 finger protein ATL32 (323 aa).

Positions 1–28 (MMTRVECFNPHRWIILHVAIIIQSKANA) are cleaved as a signal peptide. Residues 47–67 (TTVFAVLVTLFFLTGLLSVYI) form a helical membrane-spanning segment. The segment at 124-166 (CAICLNELEDHETVRLLPICNHLFHIDCIDTWLYSHATCPVCR) adopts an RING-type; atypical zinc-finger fold. Residues 210-229 (SSEISGKFPRSNSTGHSMDR) form a disordered region.

This sequence belongs to the RING-type zinc finger family. ATL subfamily.

It is found in the membrane. It carries out the reaction S-ubiquitinyl-[E2 ubiquitin-conjugating enzyme]-L-cysteine + [acceptor protein]-L-lysine = [E2 ubiquitin-conjugating enzyme]-L-cysteine + N(6)-ubiquitinyl-[acceptor protein]-L-lysine.. The protein operates within protein modification; protein ubiquitination. This Arabidopsis thaliana (Mouse-ear cress) protein is RING-H2 finger protein ATL32 (ATL32).